The chain runs to 811 residues: Phenylalanine--tRNA ligase beta subunit (811 aa).

In terms of domain architecture, tRNA-binding spans 39–151 (RTWAAGVVVG…AGLQAGQPVG (113 aa)). Residues 409 to 495 (EPEHSITLRL…RLYGYDNFGE (87 aa)) enclose the B5 domain. Residues Asp-473, Asp-479, Glu-482, and Glu-483 each contribute to the Mg(2+) site. Residues 717-810 (SSFPASDRDL…LVERFRVTLR (94 aa)) form the FDX-ACB domain.

It belongs to the phenylalanyl-tRNA synthetase beta subunit family. Type 1 subfamily. In terms of assembly, tetramer of two alpha and two beta subunits. The cofactor is Mg(2+).

Its subcellular location is the cytoplasm. It catalyses the reaction tRNA(Phe) + L-phenylalanine + ATP = L-phenylalanyl-tRNA(Phe) + AMP + diphosphate + H(+). This Synechococcus sp. (strain ATCC 27144 / PCC 6301 / SAUG 1402/1) (Anacystis nidulans) protein is Phenylalanine--tRNA ligase beta subunit.